The chain runs to 699 residues: Chitinase A1 (699 aa).

Residues 1-41 form the signal peptide; the sequence is MINLNKHTAFKKTAKFFLGLSLLLSVIVPSFALQPATAEAA. Residues 44–454 form the GH18 domain; sequence YKIVGYYPSW…NKLKADLPTG (411 aa). Chitin-binding positions include 135 to 136 and 162 to 165; these read DQ and GGWT. The active-site Proton donor is the Glu-204. Chitin contacts are provided by residues Tyr-205, 277–280, and Trp-433; that span reads MTYD. Positions 449–471 are disordered; it reads ADLPTGGTVPPVDTTAPSVPGNA. Over residues 452–465 the composition is skewed to low complexity; the sequence is PTGGTVPPVDTTAP. 2 Fibronectin type-III domains span residues 467–553 and 562–647; these read VPGN…TAQP and APTN…TAAE.

The protein belongs to the glycosyl hydrolase 18 family. Chitinase class II subfamily.

The enzyme catalyses Random endo-hydrolysis of N-acetyl-beta-D-glucosaminide (1-&gt;4)-beta-linkages in chitin and chitodextrins.. The polypeptide is Chitinase A1 (chiA1) (Niallia circulans (Bacillus circulans)).